Reading from the N-terminus, the 193-residue chain is Ion-translocating oxidoreductase complex subunit A (193 aa).

The next 6 membrane-spanning stretches (helical) occupy residues Leu-5–Leu-25, Met-39–Val-59, Phe-62–Ala-82, Leu-102–Leu-122, Ala-134–Ile-154, and Ser-171–Val-191.

It belongs to the NqrDE/RnfAE family. The complex is composed of six subunits: RnfA, RnfB, RnfC, RnfD, RnfE and RnfG.

It is found in the cell inner membrane. Its function is as follows. Part of a membrane-bound complex that couples electron transfer with translocation of ions across the membrane. The polypeptide is Ion-translocating oxidoreductase complex subunit A (Edwardsiella ictaluri (strain 93-146)).